A 260-amino-acid polypeptide reads, in one-letter code: 1-(5-phosphoribosyl)-5-[(5-phosphoribosylamino)methylideneamino] imidazole-4-carboxamide isomerase (260 aa).

Asp8 functions as the Proton acceptor in the catalytic mechanism. Asp130 functions as the Proton donor in the catalytic mechanism.

It belongs to the HisA/HisF family.

It is found in the cytoplasm. It catalyses the reaction 1-(5-phospho-beta-D-ribosyl)-5-[(5-phospho-beta-D-ribosylamino)methylideneamino]imidazole-4-carboxamide = 5-[(5-phospho-1-deoxy-D-ribulos-1-ylimino)methylamino]-1-(5-phospho-beta-D-ribosyl)imidazole-4-carboxamide. The protein operates within amino-acid biosynthesis; L-histidine biosynthesis; L-histidine from 5-phospho-alpha-D-ribose 1-diphosphate: step 4/9. In Chlorobium phaeobacteroides (strain BS1), this protein is 1-(5-phosphoribosyl)-5-[(5-phosphoribosylamino)methylideneamino] imidazole-4-carboxamide isomerase.